The chain runs to 247 residues: Aliphatic sulfonates import ATP-binding protein SsuB 2 (247 aa).

The region spanning 28-242 (VSVRGLQRRY…ALRPILLEEL (215 aa)) is the ABC transporter domain. Residue 60 to 67 (GESGCGKT) coordinates ATP.

This sequence belongs to the ABC transporter superfamily. Aliphatic sulfonates importer (TC 3.A.1.17.2) family. As to quaternary structure, the complex is composed of two ATP-binding proteins (SsuB), two transmembrane proteins (SsuC) and a solute-binding protein (SsuA).

The protein localises to the cell inner membrane. It carries out the reaction ATP + H2O + aliphatic sulfonate-[sulfonate-binding protein]Side 1 = ADP + phosphate + aliphatic sulfonateSide 2 + [sulfonate-binding protein]Side 1.. In terms of biological role, part of the ABC transporter complex SsuABC involved in aliphatic sulfonates import. Responsible for energy coupling to the transport system. This is Aliphatic sulfonates import ATP-binding protein SsuB 2 from Paraburkholderia xenovorans (strain LB400).